Here is a 114-residue protein sequence, read N- to C-terminus: SCP2 domain-containing protein YusD (114 aa).

The SCP2 domain occupies 21-101 (NASTLLITFQ…RALLKLEAIL (81 aa)).

This Bacillus subtilis (strain 168) protein is SCP2 domain-containing protein YusD (yusD).